A 436-amino-acid polypeptide reads, in one-letter code: Trigger factor (436 aa).

The PPIase FKBP-type domain maps to 161 to 246 (DDRVTVDFVG…VNKVEGLSLP (86 aa)).

The protein belongs to the FKBP-type PPIase family. Tig subfamily.

Its subcellular location is the cytoplasm. It carries out the reaction [protein]-peptidylproline (omega=180) = [protein]-peptidylproline (omega=0). In terms of biological role, involved in protein export. Acts as a chaperone by maintaining the newly synthesized protein in an open conformation. Functions as a peptidyl-prolyl cis-trans isomerase. The polypeptide is Trigger factor (Pseudoalteromonas atlantica (strain T6c / ATCC BAA-1087)).